Consider the following 1486-residue polypeptide: Chromosome partition protein MukB (1486 aa).

Residue 34-41 (GGNGAGKS) participates in ATP binding. Coiled-coil stretches lie at residues 326-418 (LEAD…QYNQ), 444-480 (LETF…QAYQ), and 509-603 (RHLA…RAPV). The flexible hinge stretch occupies residues 666-783 (PGGSEDQRLN…EVPLFGRAAR (118 aa)). Coiled-coil stretches lie at residues 835–923 (EAEI…AKLE), 977–1115 (EMLS…TAKA), and 1209–1266 (VEAI…QNVS).

It belongs to the SMC family. MukB subfamily. As to quaternary structure, homodimerization via its hinge domain. Binds to DNA via its C-terminal region. Interacts, and probably forms a ternary complex, with MukE and MukF via its C-terminal region. The complex formation is stimulated by calcium or magnesium. Interacts with tubulin-related protein FtsZ.

It is found in the cytoplasm. The protein resides in the nucleoid. Its function is as follows. Plays a central role in chromosome condensation, segregation and cell cycle progression. Functions as a homodimer, which is essential for chromosome partition. Involved in negative DNA supercoiling in vivo, and by this means organize and compact chromosomes. May achieve or facilitate chromosome segregation by condensation DNA from both sides of a centrally located replisome during cell division. In Shigella flexneri serotype 5b (strain 8401), this protein is Chromosome partition protein MukB.